The sequence spans 79 residues: uncharacterized protein (79 aa).

This is an uncharacterized protein from Escherichia coli (strain K12).